The chain runs to 457 residues: Arginine biosynthesis bifunctional protein ArgJ, mitochondrial (457 aa).

Thr184, Lys213, Thr224, Glu312, Asn452, and Thr457 together coordinate substrate. Thr224 acts as the Nucleophile in catalysis.

It belongs to the ArgJ family. In terms of assembly, heterodimer of an alpha and a beta chain. The alpha and beta chains are autoproteolytically processed from a single precursor protein within the mitochondrion.

The protein resides in the mitochondrion matrix. It carries out the reaction N(2)-acetyl-L-ornithine + L-glutamate = N-acetyl-L-glutamate + L-ornithine. The catalysed reaction is L-glutamate + acetyl-CoA = N-acetyl-L-glutamate + CoA + H(+). The protein operates within amino-acid biosynthesis; L-arginine biosynthesis; L-ornithine and N-acetyl-L-glutamate from L-glutamate and N(2)-acetyl-L-ornithine (cyclic): step 1/1. It functions in the pathway amino-acid biosynthesis; L-arginine biosynthesis; N(2)-acetyl-L-ornithine from L-glutamate: step 1/4. In terms of biological role, catalyzes two activities which are involved in the cyclic version of arginine biosynthesis: the synthesis of acetylglutamate from glutamate and acetyl-CoA, and of ornithine by transacetylation between acetylornithine and glutamate. The protein is Arginine biosynthesis bifunctional protein ArgJ, mitochondrial of Aspergillus terreus (strain NIH 2624 / FGSC A1156).